Consider the following 682-residue polypeptide: Epithelial sodium channel subunit alpha (682 aa).

Over 1-111 (MLMRLLPLPS…CSKHNRMKTA (111 aa)) the chain is Cytoplasmic. A disordered region spans residues 34–69 (AQGPLPPQPLQGPLKGDKCEQPGLGPEPTAPQQHTE). The chain crosses the membrane as a helical span at residues 112 to 132 (FWAVLWLCTFGMMYWQFALLF). The Extracellular portion of the chain corresponds to 133–586 (GEYFSYPVSL…SQWSLWFGSS (454 aa)). Intrachain disulfides connect cysteine 159-cysteine 329, cysteine 253-cysteine 260, cysteine 306-cysteine 313, cysteine 418-cysteine 503, cysteine 440-cysteine 480, cysteine 440-cysteine 499, cysteine 444-cysteine 495, cysteine 453-cysteine 480, cysteine 453-cysteine 503, and cysteine 455-cysteine 469. Asparagine 191 carries an N-linked (GlcNAc...) asparagine glycan. Positions 201 to 267 (RSRRSLADTL…SDCFYQTSSS (67 aa)) are gating release of inhibition by proteolysis (GRIP); protease-sensitive region that is responsible for the proteolytic activation of the channel. Positions 221–240 (PEPRRARSSDPSSVRDNNPR) are disordered. N-linked (GlcNAc...) asparagine glycosylation occurs at asparagine 504. A helical transmembrane segment spans residues 587–607 (VLSVVEMAEFMFDLLVITLLM). The Cytoplasmic segment spans residues 608–682 (LLRRFRSRYW…SSAACAPREP (75 aa)). A PY motif; recruits WW domain-containing proteins and is thereby required for ubiquitination and inhibition of the channel by NEDD4 and NEDD4L motif is present at residues 653–657 (PPPAY).

It belongs to the amiloride-sensitive sodium channel (TC 1.A.6) family. SCNN1A subfamily. In terms of assembly, heterotrimer; containing an alpha/SCNN1A, a beta/SCNN1B and a gamma/SCNN1G subunit. Interacts with WWP1 (via WW domains). Interacts with WWP2 (via WW domains); inhibits the channel. Interacts with BPIFA1; the interaction is indirect via SCNN1B and inhibits the proteolytic processing of SCNN1A and SCNN1G and the activation of ENaC. Interacts with the full-length immature form of PCSK9 (pro-PCSK9). Post-translationally, ubiquitinated. Can be ubiquitinated at multiple sites and undergo monoubiquitination and polyubiquitination. Ubiquitination by NEDD4 or NEDD4L inhibits the ENaC channel through endocytosis, intracellular retention and degradation of its individual subunits. N-glycosylated. In terms of processing, ENaC is activated through the proteolytic maturation of its subunits. Furin cleaves the SCNN1A subunit, which results in a stepwise increase in the open probability of the channel due to the release of an inhibitory tract. BPIFA1, which is recruited by the SCNN1B subunit, prevents the proteolytic activation of ENaC.

It is found in the apical cell membrane. The protein localises to the cell projection. It localises to the cilium. Its subcellular location is the cytoplasmic granule. The protein resides in the cytoplasm. It is found in the cytoplasmic vesicle. The protein localises to the secretory vesicle. It localises to the acrosome. Its subcellular location is the flagellum. The enzyme catalyses Na(+)(in) = Na(+)(out). With respect to regulation, originally identified and characterized by its inhibition by the diuretic drug amiloride. In terms of biological role, this is one of the three pore-forming subunits of the heterotrimeric epithelial sodium channel (ENaC), a critical regulator of sodium balance and fluid homeostasis. ENaC operates in epithelial tissues, where it mediates the electrodiffusion of sodium ions from extracellular fluid through the apical membrane of cells, with water following osmotically. It plays a key role in maintaining sodium homeostasis through electrogenic sodium reabsorption in the kidneys. Additionally, ENaC is essential for airway surface liquid homeostasis, which is crucial for proper mucus clearance. The polypeptide is Epithelial sodium channel subunit alpha (Cavia porcellus (Guinea pig)).